The primary structure comprises 363 residues: UDP-N-acetylglucosamine--N-acetylmuramyl-(pentapeptide) pyrophosphoryl-undecaprenol N-acetylglucosamine transferase (363 aa).

Residues 21–23 (TGG), Asn129, Arg170, Ser196, and Gln290 each bind UDP-N-acetyl-alpha-D-glucosamine.

The protein belongs to the glycosyltransferase 28 family. MurG subfamily.

It localises to the cell inner membrane. The catalysed reaction is di-trans,octa-cis-undecaprenyl diphospho-N-acetyl-alpha-D-muramoyl-L-alanyl-D-glutamyl-meso-2,6-diaminopimeloyl-D-alanyl-D-alanine + UDP-N-acetyl-alpha-D-glucosamine = di-trans,octa-cis-undecaprenyl diphospho-[N-acetyl-alpha-D-glucosaminyl-(1-&gt;4)]-N-acetyl-alpha-D-muramoyl-L-alanyl-D-glutamyl-meso-2,6-diaminopimeloyl-D-alanyl-D-alanine + UDP + H(+). It functions in the pathway cell wall biogenesis; peptidoglycan biosynthesis. Its function is as follows. Cell wall formation. Catalyzes the transfer of a GlcNAc subunit on undecaprenyl-pyrophosphoryl-MurNAc-pentapeptide (lipid intermediate I) to form undecaprenyl-pyrophosphoryl-MurNAc-(pentapeptide)GlcNAc (lipid intermediate II). The chain is UDP-N-acetylglucosamine--N-acetylmuramyl-(pentapeptide) pyrophosphoryl-undecaprenol N-acetylglucosamine transferase from Synechococcus sp. (strain ATCC 27144 / PCC 6301 / SAUG 1402/1) (Anacystis nidulans).